We begin with the raw amino-acid sequence, 349 residues long: Serine/threonine-protein kinase SRK2A (349 aa).

Positions Y12 to F268 constitute a Protein kinase domain. Residues I18–A26 and K41 contribute to the ATP site. D131 acts as the Proton acceptor in catalysis. The interval D151–E177 is activation loop.

It belongs to the protein kinase superfamily. Ser/Thr protein kinase family.

It carries out the reaction L-seryl-[protein] + ATP = O-phospho-L-seryl-[protein] + ADP + H(+). The enzyme catalyses L-threonyl-[protein] + ATP = O-phospho-L-threonyl-[protein] + ADP + H(+). Activated by osmotic stress and by abscisic acid (ABA). Activation by NaCl is dependent on ABA. Involved in early responses to osmotic stress. The protein is Serine/threonine-protein kinase SRK2A of Physcomitrium patens (Spreading-leaved earth moss).